Reading from the N-terminus, the 187-residue chain is Sliding-clamp-loader small subunit (187 aa).

The protein belongs to the Tevenvirinae sliding-clamp-loader small subunit family. The sliding-clamp-loader consists of 4 large subunits and 1 small subunit. Interacts with the sliding clamp; this interaction allows the sliding-clamp-loader to open the sliding clamp. Part of the replicase complex that includes the DNA polymerase, the polymerase clamp, the clamp loader complex, the single-stranded DNA binding protein, the primase, the helicase and the helicase assembly factor.

In terms of biological role, forms the sliding-clamp-loader together with the small subunit. The clamp loader holds the clamp in an open conformation and places it onto the DNA. This is Sliding-clamp-loader small subunit (62) from Escherichia coli (Bacteriophage T4).